Here is a 77-residue protein sequence, read N- to C-terminus: Dermatoxin-A1 (77 aa).

Residues 1–22 (MAFLKKSLFLVLFLGLVPLFLC) form the signal peptide. A propeptide spanning residues 23 to 42 (ENEKREGENEKEENDDQSEE) is cleaved from the precursor. Gln-76 is subject to Glutamine amide.

It belongs to the frog skin active peptide (FSAP) family. Dermatoxin subfamily. In terms of tissue distribution, expressed by the skin glands.

The protein localises to the secreted. Possesses a potent antimicrobial activity against Gram-positive and Gram-negative bacteria. Probably acts by disturbing membrane functions with its amphipathic structure. In Agalychnis annae (Blue-sided leaf frog), this protein is Dermatoxin-A1.